A 582-amino-acid polypeptide reads, in one-letter code: Fructose-1,6-bisphosphatase class 3 (582 aa).

It belongs to the FBPase class 3 family. Mn(2+) serves as cofactor.

It carries out the reaction beta-D-fructose 1,6-bisphosphate + H2O = beta-D-fructose 6-phosphate + phosphate. It functions in the pathway carbohydrate biosynthesis; gluconeogenesis. This is Fructose-1,6-bisphosphatase class 3 from Saccharophagus degradans (strain 2-40 / ATCC 43961 / DSM 17024).